The following is a 140-amino-acid chain: Large ribosomal subunit protein uL13 (140 aa).

Belongs to the universal ribosomal protein uL13 family. Part of the 50S ribosomal subunit.

Functionally, this protein is one of the early assembly proteins of the 50S ribosomal subunit, although it is not seen to bind rRNA by itself. It is important during the early stages of 50S assembly. The polypeptide is Large ribosomal subunit protein uL13 (Nautilia profundicola (strain ATCC BAA-1463 / DSM 18972 / AmH)).